The primary structure comprises 232 residues: Large ribosomal subunit protein uL1 (232 aa).

It belongs to the universal ribosomal protein uL1 family. Part of the 50S ribosomal subunit.

Binds directly to 23S rRNA. The L1 stalk is quite mobile in the ribosome, and is involved in E site tRNA release. Its function is as follows. Protein L1 is also a translational repressor protein, it controls the translation of the L11 operon by binding to its mRNA. In Rhizobium rhizogenes (strain K84 / ATCC BAA-868) (Agrobacterium radiobacter), this protein is Large ribosomal subunit protein uL1.